Consider the following 434-residue polypeptide: Ribitol-5-phosphate xylosyltransferase 1 (434 aa).

Residues 1–7 (MRFFRRK) lie on the Cytoplasmic side of the membrane. A helical; Signal-anchor for type II membrane protein membrane pass occupies residues 8–28 (IAIIVILAYAIFSLYAAYNVF). The Extracellular portion of the chain corresponds to 29–434 (FSKRVISRVH…VLEENFFKIT (406 aa)).

It belongs to the TMEM5 family.

It is found in the golgi apparatus membrane. The catalysed reaction is 3-O-[Rib-ol-P-Rib-ol-P-3-beta-D-GalNAc-(1-&gt;3)-beta-D-GlcNAc-(1-&gt;4)-(O-6-P-alpha-D-Man)]-Thr-[protein] + UDP-alpha-D-xylose = 3-O-[beta-D-Xyl-(1-&gt;4)-Rib-ol-P-Rib-ol-P-3-beta-D-GalNAc-(1-&gt;3)-beta-D-GlcNAc-(1-&gt;4)-(O-6-P-alpha-D-Man)]-Thr-[protein] + UDP + H(+). Its pathway is protein modification; protein glycosylation. Functionally, acts as a UDP-D-xylose:ribitol-5-phosphate beta1,4-xylosyltransferase, which catalyzes the transfer of UDP-D-xylose to ribitol 5-phosphate (Rbo5P) to form the Xylbeta1-4Rbo5P linkage on O-mannosyl glycan. Participates in the biosynthesis of the phosphorylated O-mannosyl trisaccharide (N-acetylgalactosamine-beta-3-N-acetylglucosamine-beta-4-(phosphate-6-)mannose), a carbohydrate structure present in alpha-dystroglycan (DAG1), which is required for binding laminin G-like domain-containing extracellular proteins with high affinity. The chain is Ribitol-5-phosphate xylosyltransferase 1 (rxylt1) from Danio rerio (Zebrafish).